We begin with the raw amino-acid sequence, 353 residues long: UPF0658 Golgi apparatus membrane protein C23H3.04 (353 aa).

The next 8 membrane-spanning stretches (helical) occupy residues Ile-39–Cys-59, Ser-76–Val-96, Asn-103–Val-123, Pro-172–Ala-192, Leu-226–Pro-246, Ala-249–Leu-269, Leu-281–Ile-301, and Met-318–Phe-338.

This sequence belongs to the UPF0658 family.

Its subcellular location is the golgi apparatus membrane. In Schizosaccharomyces pombe (strain 972 / ATCC 24843) (Fission yeast), this protein is UPF0658 Golgi apparatus membrane protein C23H3.04.